The primary structure comprises 572 residues: Proline--tRNA ligase (572 aa).

Belongs to the class-II aminoacyl-tRNA synthetase family. ProS type 1 subfamily. Homodimer.

Its subcellular location is the cytoplasm. The catalysed reaction is tRNA(Pro) + L-proline + ATP = L-prolyl-tRNA(Pro) + AMP + diphosphate. Its function is as follows. Catalyzes the attachment of proline to tRNA(Pro) in a two-step reaction: proline is first activated by ATP to form Pro-AMP and then transferred to the acceptor end of tRNA(Pro). As ProRS can inadvertently accommodate and process non-cognate amino acids such as alanine and cysteine, to avoid such errors it has two additional distinct editing activities against alanine. One activity is designated as 'pretransfer' editing and involves the tRNA(Pro)-independent hydrolysis of activated Ala-AMP. The other activity is designated 'posttransfer' editing and involves deacylation of mischarged Ala-tRNA(Pro). The misacylated Cys-tRNA(Pro) is not edited by ProRS. This is Proline--tRNA ligase from Alteromonas mediterranea (strain DSM 17117 / CIP 110805 / LMG 28347 / Deep ecotype).